We begin with the raw amino-acid sequence, 333 residues long: Taste receptor type 2 member 38 (333 aa).

The Extracellular segment spans residues 1–17 (MLTLTRICTVSYEVRST). Residues 18-38 (FLFISVLEFAVGFLTNAFIFL) traverse the membrane as a helical segment. Residues 39 to 55 (VNFWDVVKRQPLSNSDC) lie on the Cytoplasmic side of the membrane. A helical membrane pass occupies residues 56-76 (VLLCLSISRLFLHGLLFLSAI). Residues 77 to 94 (QLTHFQKLSEPLNHSYHA) lie on the Extracellular side of the membrane. The chain crosses the membrane as a helical span at residues 95-115 (IIMLWMIANQANLWLATCLSL). The Cytoplasmic segment spans residues 116 to 142 (LYCSKLIRSSHTFLICLASWVSRKICQ). Residues 143–163 (MLLGIILCSCICTVLCVWCYF) form a helical membrane-spanning segment. Topologically, residues 164 to 190 (SRPHFTVTTVLFTNNNTRLNWQIKDLN) are extracellular. Asparagine 178 carries an N-linked (GlcNAc...) asparagine glycan. The helical transmembrane segment at 191-211 (LFYSFLFCYLWSVPPFLLFLV) threads the bilayer. The Cytoplasmic portion of the chain corresponds to 212-251 (SSGMLTVSLGRHMRTMKVYTRDFRDPSLEAHIKALKSLVS). A helical transmembrane segment spans residues 252-272 (FFCFFVISSCAAFISVPLLIL). Residues 273 to 276 (WRDK) lie on the Extracellular side of the membrane. Residues 277-297 (IGVMVCVGIMAACPSGHAAIL) traverse the membrane as a helical segment. The Cytoplasmic segment spans residues 298-333 (ISGNAKLRRAVTTILLWAQSSLKVRADHKADSRTLC).

This sequence belongs to the G-protein coupled receptor T2R family.

It localises to the membrane. In terms of biological role, receptor that may play a role in the perception of bitterness and is gustducin-linked. May play a role in sensing the chemical composition of the gastrointestinal content. The activity of this receptor may stimulate alpha gustducin, mediate PLC-beta-2 activation and lead to the gating of TRPM5. This chain is Taste receptor type 2 member 38 (TAS2R38), found in Hylobates klossii (Kloss's gibbon).